Reading from the N-terminus, the 458-residue chain is Probable alpha-L-glutamate ligase (458 aa).

A unknown region spans residues 1 to 162 (MSDNKFIIGS…YGVKSAKKSG (162 aa)). The tract at residues 163–458 (LKIGLLASNP…IEKKLGWKAE (296 aa)) is alpha-L-glutamate ligase. An ATP-grasp domain is found at 267-450 (LQLLQKNNLD…IAGAMIDSIE (184 aa)). Residues K304, 341-342 (EF), D350, and 374-376 (RAN) each bind ATP. Residues D411, E423, and N425 each contribute to the Mg(2+) site. 3 residues coordinate Mn(2+): D411, E423, and N425.

In the C-terminal section; belongs to the RimK family. Mg(2+) serves as cofactor. It depends on Mn(2+) as a cofactor.

This is Probable alpha-L-glutamate ligase from Shewanella halifaxensis (strain HAW-EB4).